Reading from the N-terminus, the 391-residue chain is Acridone synthase 2 (391 aa).

The active site involves C164.

The protein belongs to the thiolase-like superfamily. Chalcone/stilbene synthases family. In terms of assembly, homodimer.

It carries out the reaction N-methylanthraniloyl-CoA + 3 malonyl-CoA + 3 H(+) = 1,3-dihydroxy-N-methylacridone + 3 CO2 + 4 CoA + H2O. The protein is Acridone synthase 2 (ACS2) of Ruta graveolens (Common rue).